Here is a 415-residue protein sequence, read N- to C-terminus: S-inosyl-L-homocysteine hydrolase (415 aa).

D123 and E148 together coordinate substrate. 149 to 151 (TTT) contacts NAD(+). Substrate is bound by residues K178 and D182. NAD(+) is bound by residues N183, 212–217 (GYGWCG), E235, 291–293 (AGH), and N337.

Belongs to the adenosylhomocysteinase family. The cofactor is NAD(+).

It localises to the cytoplasm. The catalysed reaction is S-inosyl-L-homocysteine + H2O = L-homocysteine + inosine. It participates in amino-acid biosynthesis; S-adenosyl-L-methionine biosynthesis. Catalyzes the hydrolysis of S-inosyl-L-homocysteine (SIH) to L-homocysteine (Hcy) and inosine. Likely functions in a S-adenosyl-L-methionine (SAM) recycling pathway from S-adenosyl-L-homocysteine (SAH) produced from SAM-dependent methylation reactions. Can also catalyze the reverse reaction in vitro, i.e. the synthesis of SIH from Hcy and inosine. This Methanococcus maripaludis (strain DSM 14266 / JCM 13030 / NBRC 101832 / S2 / LL) protein is S-inosyl-L-homocysteine hydrolase.